The primary structure comprises 129 residues: MSLSPASGIGRFYAKSAKIIRFVRLGCTNRPFYHIVVMERRKNQHQPVIEQVGSFDPLPNDYNERLVALNTERIRYWLGKGAHLSTPAAELLGIAGLLPIHPRTYMTAWRNRRTAAEAEASPEKAESTA.

Belongs to the bacterial ribosomal protein bS16 family. In terms of assembly, component of the mitochondrial ribosome small subunit (28S) which comprises a 12S rRNA and about 30 distinct proteins.

The protein localises to the mitochondrion. The polypeptide is Small ribosomal subunit protein bS16m (mRpS16) (Drosophila melanogaster (Fruit fly)).